The chain runs to 150 residues: Large ribosomal subunit protein bL9 (150 aa).

It belongs to the bacterial ribosomal protein bL9 family.

Its function is as follows. Binds to the 23S rRNA. This is Large ribosomal subunit protein bL9 from Wigglesworthia glossinidia brevipalpis.